A 185-amino-acid polypeptide reads, in one-letter code: Photosystem I assembly protein Ycf4 (185 aa).

Helical transmembrane passes span 21 to 43 (NFFW…ASSY) and 63 to 85 (GVVM…CTIL).

The protein belongs to the Ycf4 family.

It is found in the plastid. Its subcellular location is the chloroplast thylakoid membrane. Seems to be required for the assembly of the photosystem I complex. The sequence is that of Photosystem I assembly protein Ycf4 from Saccharum hybrid (Sugarcane).